The primary structure comprises 197 residues: Segregation and condensation protein B (197 aa).

It belongs to the ScpB family. In terms of assembly, homodimer. Homodimerization may be required to stabilize the binding of ScpA to the Smc head domains. Component of a cohesin-like complex composed of ScpA, ScpB and the Smc homodimer, in which ScpA and ScpB bind to the head domain of Smc. The presence of the three proteins is required for the association of the complex with DNA.

Its subcellular location is the cytoplasm. Its function is as follows. Participates in chromosomal partition during cell division. May act via the formation of a condensin-like complex containing Smc and ScpA that pull DNA away from mid-cell into both cell halves. The polypeptide is Segregation and condensation protein B (Bacillus pumilus (strain SAFR-032)).